We begin with the raw amino-acid sequence, 639 residues long: UvrABC system protein C (639 aa).

The region spanning 20–97 is the GIY-YIG domain; it reads ERSGVYRMFD…IKKFQPKFNI (78 aa). A UVR domain is found at 207–242; the sequence is KELQENLSRKMEELSSQMRFEEAAEIRDRIKALSYV.

It belongs to the UvrC family. As to quaternary structure, interacts with UvrB in an incision complex.

The protein resides in the cytoplasm. Functionally, the UvrABC repair system catalyzes the recognition and processing of DNA lesions. UvrC both incises the 5' and 3' sides of the lesion. The N-terminal half is responsible for the 3' incision and the C-terminal half is responsible for the 5' incision. In Rickettsia conorii (strain ATCC VR-613 / Malish 7), this protein is UvrABC system protein C.